A 456-amino-acid chain; its full sequence is Trigger factor (456 aa).

The PPIase FKBP-type domain maps to 192–277 (GDTVVIDFVG…IHEVKTKEVP (86 aa)).

Belongs to the FKBP-type PPIase family. Tig subfamily.

The protein resides in the cytoplasm. It carries out the reaction [protein]-peptidylproline (omega=180) = [protein]-peptidylproline (omega=0). In terms of biological role, involved in protein export. Acts as a chaperone by maintaining the newly synthesized protein in an open conformation. Functions as a peptidyl-prolyl cis-trans isomerase. The chain is Trigger factor from Streptococcus pyogenes serotype M4 (strain MGAS10750).